A 442-amino-acid polypeptide reads, in one-letter code: MSSESLTVIVGLGKTGLSCAQFLAAKNRPFAVMDSREEPPEWENFIKTYPRVELIRGQFSEKLLNEAQEIILSPGVSLQEPLIAKQAAQGKSIIGDIELFARNVNKPIIAITGSNGKTTVTTVVGLMMKAAGRNVSVCGNIGEPVLEQITPEPDYYVLELSSFQLETTFSLRSQAATILNISEDHMNRYATLQDYLRAKQRIYTDCFIPIVNADEPEIWRHLPFNKKPLSFGLNNAADFSLAEHNQKTSIAYQGKILMPIQELKLNARHHLQNALAALALGTAAKIPIENMLHVLRDFSGIRHRCQWVRKYKEIDYYNDSKGTNVGATRAAIESLGQAAKGQLILIAGGQGKGADFSPLKDVVKRYVKQVILIGEDAPLLEKTLKEITVIKHADSMNEAVKRSTQAAKAGDIVLLSPACASFDMFTNYEHRGDVFTETVEAL.

Residue glycine 113 to threonine 119 participates in ATP binding.

The protein belongs to the MurCDEF family.

It is found in the cytoplasm. It carries out the reaction UDP-N-acetyl-alpha-D-muramoyl-L-alanine + D-glutamate + ATP = UDP-N-acetyl-alpha-D-muramoyl-L-alanyl-D-glutamate + ADP + phosphate + H(+). It functions in the pathway cell wall biogenesis; peptidoglycan biosynthesis. Functionally, cell wall formation. Catalyzes the addition of glutamate to the nucleotide precursor UDP-N-acetylmuramoyl-L-alanine (UMA). This Coxiella burnetii (strain Dugway 5J108-111) protein is UDP-N-acetylmuramoylalanine--D-glutamate ligase.